We begin with the raw amino-acid sequence, 229 residues long: Putative germin-like protein subfamily 1 member 2 (229 aa).

The N-terminal stretch at 1 to 24 is a signal peptide; sequence MKGLVQFLVAKIILLVLASTFVHC. A disulfide bridge connects residues C34 and C50. N-linked (GlcNAc...) asparagine glycans are attached at residues N38 and N71. In terms of domain architecture, Cupin type-1 spans 64–215; sequence SGLNIPGNTS…AFALDVNIVR (152 aa). Residues H112 and H114 each contribute to the Mn(2+) site. N139 is a glycosylation site (N-linked (GlcNAc...) asparagine). Residue H163 coordinates Mn(2+).

It belongs to the germin family. In terms of assembly, oligomer (believed to be a pentamer but probably hexamer).

It localises to the secreted. Its subcellular location is the extracellular space. It is found in the apoplast. May play a role in plant defense. Probably has no oxalate oxidase activity even if the active site is conserved. The chain is Putative germin-like protein subfamily 1 member 2 from Arabidopsis thaliana (Mouse-ear cress).